A 189-amino-acid polypeptide reads, in one-letter code: Elongation factor P (189 aa).

This sequence belongs to the elongation factor P family.

It is found in the cytoplasm. The protein operates within protein biosynthesis; polypeptide chain elongation. In terms of biological role, involved in peptide bond synthesis. Stimulates efficient translation and peptide-bond synthesis on native or reconstituted 70S ribosomes in vitro. Probably functions indirectly by altering the affinity of the ribosome for aminoacyl-tRNA, thus increasing their reactivity as acceptors for peptidyl transferase. In Rhizobium leguminosarum bv. trifolii (strain WSM2304), this protein is Elongation factor P.